A 196-amino-acid chain; its full sequence is MASTSLCAANPSASQNLRKVSGFVENKTTQCSFSIESILGLEQKKDGAAVKPHRPWMDGCMHQLGDPHLQIPVVSYENSLFHANSNLMQEEKVLNCEKYFSVTVTERLSFKRELSWYRGRRPRTAFTRNQIEVLENVFKMNSYPGIDIREELARKLDLEEDRIQIWFQNRRAKLKRSHRESQFLMVKNNFTSSLLE.

The homeobox DNA-binding region spans 119–178 (GRRPRTAFTRNQIEVLENVFKMNSYPGIDIREELARKLDLEEDRIQIWFQNRRAKLKRSH).

This sequence belongs to the ANF homeobox family.

The protein localises to the nucleus. In terms of biological role, may be involved in the early patterning of the most anterior region of the main embryonic body axis. The sequence is that of Homeobox protein ANF-1 from Gallus gallus (Chicken).